A 330-amino-acid chain; its full sequence is Phosphate acyltransferase (330 aa).

The protein belongs to the PlsX family. Homodimer. Probably interacts with PlsY.

It localises to the cytoplasm. It catalyses the reaction a fatty acyl-[ACP] + phosphate = an acyl phosphate + holo-[ACP]. It participates in lipid metabolism; phospholipid metabolism. Functionally, catalyzes the reversible formation of acyl-phosphate (acyl-PO(4)) from acyl-[acyl-carrier-protein] (acyl-ACP). This enzyme utilizes acyl-ACP as fatty acyl donor, but not acyl-CoA. This Bacillus cytotoxicus (strain DSM 22905 / CIP 110041 / 391-98 / NVH 391-98) protein is Phosphate acyltransferase.